Reading from the N-terminus, the 307-residue chain is Leucine-rich repeat-containing protein 25 (307 aa).

Positions 1–20 (MGGPLMWALLLPLLLHQAGS) are cleaved as a signal peptide. At 21-168 (QTSSCSVLSG…SCPSGLTKIA (148 aa)) the chain is on the extracellular side. N-linked (GlcNAc...) asparagine glycosylation is found at Asn44 and Asn56. LRR repeat units lie at residues 63–86 (SVQL…RDLE) and 87–110 (QLQL…XXGC). N-linked (GlcNAc...) asparagine glycans are attached at residues Asn95, Asn132, and Asn151. The helical transmembrane segment at 169 to 189 (IGALAASGSLLLVLAIAGPVL) threads the bilayer. Residues 190-307 (AWRFCRHRMD…DDEEYVVPGR (118 aa)) are Cytoplasmic-facing. The tract at residues 205-249 (TWASQDGSRSGSGRQPRYSSQGRRPKSPANTPPRSSTPDYENVFV) is disordered. Over residues 211–226 (GSRSGSGRQPRYSSQG) the composition is skewed to low complexity. Residues 232-243 (PANTPPRSSTPD) show a composition bias toward polar residues. Phosphotyrosine is present on Tyr286.

In terms of assembly, interacts with RIGI. Interacts with SQSTM1. Interacts with p65/RELA; this interaction promotes the degradation of RELA through autophagy.

The protein resides in the membrane. It is found in the cytoplasm. Functionally, plays a role in the inhibition of RLR-mediated type I interferon signaling pathway by targeting RIGI for autophagic degradation. Interacts specifically with ISG15-associated RIGI to promote interaction between RIGI and the autophagic cargo receptor p62/SQSTM1 to mediate RIGI degradation via selective autophagy. Plays also a role in the inhibition of NF-kappa-B signaling pathway and inflammatory response by promoting the degradation of p65/RELA. The protein is Leucine-rich repeat-containing protein 25 (LRRC25) of Bos taurus (Bovine).